Reading from the N-terminus, the 306-residue chain is Porphobilinogen deaminase (306 aa).

Cys244 is modified (S-(dipyrrolylmethanemethyl)cysteine).

Belongs to the HMBS family. Monomer. Dipyrromethane serves as cofactor.

It carries out the reaction 4 porphobilinogen + H2O = hydroxymethylbilane + 4 NH4(+). It functions in the pathway porphyrin-containing compound metabolism; protoporphyrin-IX biosynthesis; coproporphyrinogen-III from 5-aminolevulinate: step 2/4. Functionally, tetrapolymerization of the monopyrrole PBG into the hydroxymethylbilane pre-uroporphyrinogen in several discrete steps. In Streptococcus sanguinis (strain SK36), this protein is Porphobilinogen deaminase.